The chain runs to 462 residues: uncharacterized protein (462 aa).

The disordered stretch occupies residues 405 to 462 (QPIGNNKSSPMKREFTAMEEDKTETGDIFKLLSQQKPAKGAKSKSKKYKKTEEDLSAV). The segment covering 415 to 431 (MKREFTAMEEDKTETGD) has biased composition (basic and acidic residues). Residues 443–453 (KGAKSKSKKYK) show a composition bias toward basic residues.

This is an uncharacterized protein from Magallana gigas (Pacific oyster).